Here is a 289-residue protein sequence, read N- to C-terminus: ATP synthase gamma chain (289 aa).

It belongs to the ATPase gamma chain family. F-type ATPases have 2 components, CF(1) - the catalytic core - and CF(0) - the membrane proton channel. CF(1) has five subunits: alpha(3), beta(3), gamma(1), delta(1), epsilon(1). CF(0) has three main subunits: a, b and c.

It is found in the cell membrane. In terms of biological role, produces ATP from ADP in the presence of a proton gradient across the membrane. The gamma chain is believed to be important in regulating ATPase activity and the flow of protons through the CF(0) complex. The polypeptide is ATP synthase gamma chain (Lactococcus lactis subsp. lactis (strain IL1403) (Streptococcus lactis)).